Here is a 503-residue protein sequence, read N- to C-terminus: CDK5 regulatory subunit-associated protein 3 (503 aa).

3 consecutive short sequence motifs (shuffled ATG8-binding motif) follow at residues 266 to 269 (IDWG), 288 to 291 (IDWG), and 306 to 309 (IDWG). Residues 268 to 503 (WGDFGVEAVS…RPVNLMGTSL (236 aa)) are required for interaction with UFL1 and mediates interaction with CHEK1. The segment at 352 to 367 (DELMELEIFLSQRAVE) is RPL10a-binding domain (RBD). Lys-447 participates in a covalent cross-link: Glycyl lysine isopeptide (Lys-Gly) (interchain with G-Cter in SUMO2).

It belongs to the CDK5RAP3 family. Substrate adapter component of the UFM1 ribosome E3 ligase (UREL) complex, composed of UFL1, DDRGK1 and CDK5RAP3. Interaction with UFL1 anchors CDK5RAP3 in the cytoplasm, preventing its translocation to the nucleus which allows expression of the CCND1 cyclin and progression of cells through the G1/S transition. Interacts with ATG8 family proteins MAP1LC3A, MAP1LC3B, GABARAP, GABARAPL1 and GABARAPL2. Interacts with CDK5R1; competes with CDK5RAP1 and CDK5RAP2. Interacts with RELA. Interacts with CHEK1; may negatively regulate CHEK1 and thereby stimulate entry into mitosis. Interacts with CDKN2A/ARF and MDM2; forms a ternary complex involved in regulation of p53/TP53. Interacts with MAPK14. Interacts with CCNB1. Interacts with TUBG1; may regulate CDK5RAP3 in mitotic G2/M transition checkpoint. Post-translationally, may be phosphorylated by CDK5. In terms of processing, ubiquitinated. Probably triggers proteasomal degradation and is negatively regulated by UFL1. May be ufmylated. Post-translationally, cleaved by caspases early during apoptosis, the resulting peptides may play a role in rupture of the nuclear envelope. In terms of tissue distribution, widely expressed with higher expression in secretory tissues.

It is found in the endoplasmic reticulum membrane. The protein localises to the cytoplasm. It localises to the nucleus. The protein resides in the cytoskeleton. Its subcellular location is the microtubule organizing center. It is found in the centrosome. Its function is as follows. Substrate adapter of E3 ligase complexes mediating ufmylation, the covalent attachment of the ubiquitin-like modifier UFM1 to substrate proteins, and which is involved in various processes, such as ribosome recycling and reticulophagy (also called ER-phagy). As part of the UREL complex, plays a key role in ribosome recycling by promoting mono-ufmylation of RPL26/uL24 subunit of the 60S ribosome. Ufmylation of RPL26/uL24 occurs on free 60S ribosomes following ribosome dissociation: it weakens the junction between post-termination 60S subunits and SEC61 translocons, promoting release and recycling of the large ribosomal subunit from the endoplasmic reticulum membrane. Ufmylation of RPL26/uL24 and subsequent 60S ribosome recycling either take place after normal termination of translation or after ribosome stalling during cotranslational translocation at the endoplasmic reticulum. Within the UREL complex, CDK5RAP3 acts as a substrate adapter that constrains UFL1 ligase activity to mono-ufmylate RPL26/uL24 at 'Lys-134'. The UREL complex is also involved in reticulophagy in response to endoplasmic reticulum stress by promoting ufmylation of proteins such as CYB5R3, thereby promoting lysosomal degradation of ufmylated proteins. Also acts as a regulator of transcription: negatively regulates NF-kappa-B-mediated gene transcription through the control of RELA phosphorylation. Also regulates mitotic G2/M transition checkpoint and mitotic G2 DNA damage checkpoint. Through its interaction with CDKN2A/ARF and MDM2 may induce MDM2-dependent p53/TP53 ubiquitination, stabilization and activation in the nucleus, thereby promoting G1 cell cycle arrest and inhibition of cell proliferation. May also play a role in the rupture of the nuclear envelope during apoptosis. May regulate MAPK14 activity by regulating its dephosphorylation by PPM1D/WIP1. Required for liver development. The sequence is that of CDK5 regulatory subunit-associated protein 3 from Mus musculus (Mouse).